A 109-amino-acid chain; its full sequence is Spermidine export protein MdtI (109 aa).

Over 1-5 the chain is Periplasmic; sequence MAQFE. The helical transmembrane segment at 6 to 26 threads the bilayer; sequence WVHAAWLALAIVLEIVANVFL. Over 27–35 the chain is Cytoplasmic; that stretch reads KFSDGFRRK. Residues 36-56 form a helical membrane-spanning segment; it reads IFGLLSLAAVLAAFSALSQAV. The Periplasmic segment spans residues 57 to 63; the sequence is KGIDLSV. The chain crosses the membrane as a helical span at residues 64-84; the sequence is VYALWGGFGIAATLAAGWILF. The Cytoplasmic portion of the chain corresponds to 85 to 87; that stretch reads GQR. Residues 88–108 traverse the membrane as a helical segment; sequence LNRKGWIGLVLLLAGMIMVKL. Residue Ala109 is a topological domain, periplasmic.

The protein belongs to the drug/metabolite transporter (DMT) superfamily. Small multidrug resistance (SMR) (TC 2.A.7.1) family. MdtI subfamily. As to quaternary structure, forms a complex with MdtJ.

It is found in the cell inner membrane. Catalyzes the excretion of spermidine. In Shigella flexneri, this protein is Spermidine export protein MdtI (mdtI).